A 341-amino-acid polypeptide reads, in one-letter code: DNA-directed RNA polymerase subunit alpha (341 aa).

The interval 1 to 233 is alpha N-terminal domain (alpha-NTD); sequence MVREEVAGST…DLFLPFLHAE (233 aa). The segment at 269 to 341 is alpha C-terminal domain (alpha-CTD); it reads IPLNCIFIDQ…IDLLKNKLSF (73 aa).

The protein belongs to the RNA polymerase alpha chain family. In terms of assembly, in plastids the minimal PEP RNA polymerase catalytic core is composed of four subunits: alpha, beta, beta', and beta''. When a (nuclear-encoded) sigma factor is associated with the core the holoenzyme is formed, which can initiate transcription.

The protein localises to the plastid. Its subcellular location is the chloroplast. The enzyme catalyses RNA(n) + a ribonucleoside 5'-triphosphate = RNA(n+1) + diphosphate. Functionally, DNA-dependent RNA polymerase catalyzes the transcription of DNA into RNA using the four ribonucleoside triphosphates as substrates. The sequence is that of DNA-directed RNA polymerase subunit alpha from Lolium perenne (Perennial ryegrass).